The following is a 416-amino-acid chain: 4-hydroxy-3-methylbut-2-en-1-yl diphosphate synthase (flavodoxin) (416 aa).

C304, C307, C350, and E357 together coordinate [4Fe-4S] cluster.

Belongs to the IspG family. Requires [4Fe-4S] cluster as cofactor.

The enzyme catalyses (2E)-4-hydroxy-3-methylbut-2-enyl diphosphate + oxidized [flavodoxin] + H2O + 2 H(+) = 2-C-methyl-D-erythritol 2,4-cyclic diphosphate + reduced [flavodoxin]. It participates in isoprenoid biosynthesis; isopentenyl diphosphate biosynthesis via DXP pathway; isopentenyl diphosphate from 1-deoxy-D-xylulose 5-phosphate: step 5/6. In terms of biological role, converts 2C-methyl-D-erythritol 2,4-cyclodiphosphate (ME-2,4cPP) into 1-hydroxy-2-methyl-2-(E)-butenyl 4-diphosphate. The chain is 4-hydroxy-3-methylbut-2-en-1-yl diphosphate synthase (flavodoxin) from Agrobacterium fabrum (strain C58 / ATCC 33970) (Agrobacterium tumefaciens (strain C58)).